The primary structure comprises 569 residues: BTB/POZ domain-containing protein At3g50840 (569 aa).

The BTB domain maps to 18–87 (SDIEIEVDDI…SYGFKVDISV (70 aa)). The NPH3 domain occupies 194-459 (ELWFEDLTEL…VQVLFLEQLQ (266 aa)). Residues 240–259 (ISRSSSASSSSSSSSTTIAS) are compositionally biased toward low complexity. The disordered stretch occupies residues 240-261 (ISRSSSASSSSSSSSTTIASEN). Tyr-400 carries the phosphotyrosine modification.

Belongs to the NPH3 family.

It participates in protein modification; protein ubiquitination. May act as a substrate-specific adapter of an E3 ubiquitin-protein ligase complex (CUL3-RBX1-BTB) which mediates the ubiquitination and subsequent proteasomal degradation of target proteins. The chain is BTB/POZ domain-containing protein At3g50840 from Arabidopsis thaliana (Mouse-ear cress).